The primary structure comprises 370 residues: Cyanuric acid amidohydrolase (370 aa).

The tract at residues 1 to 106 (MRTTSVGVFK…TVFTRREVER (106 aa)) is RU A. Residues R54 and 85–86 (SG) each bind substrate. The segment at 115–251 (RLSIGMAHTR…NVVIVLGNSA (137 aa)) is RU B. K165 is an active-site residue. Residues R197 and 234 to 235 (SA) contribute to the substrate site. The Nucleophile role is filled by S234. Positions 257–370 (FEIGHAVMND…PVAVIARLSD (114 aa)) are RU C. E302 contributes to the Mg(2+) binding site. Residues R329 and 348 to 349 (SG) contribute to the substrate site. Residues A351, Q354, G355, P356, and G359 each contribute to the Mg(2+) site.

This sequence belongs to the cyclic amide hydrolase (CyAH) family. As to quaternary structure, homotetramer.

It catalyses the reaction cyanurate + H2O = 1-carboxybiuret + H(+). It functions in the pathway xenobiotic degradation; atrazine degradation; biuret from cyanurate: step 1/1. With respect to regulation, inhibited by barbituric acid. Functionally, responsible for the hydrolysis of cyanuric acid, an intermediate formed during catabolism of s-triazine based compounds in herbicides such as atrazine and polymers such as melamine. Catalyzes the hydrolytic opening of the s-triazine ring of cyanuric acid (2,4,6-trihydroxy-s-triazine) to yield carbon dioxide and carboxybiuret, which spontaneously decarboxylates to biuret. The protein is Cyanuric acid amidohydrolase of Bradyrhizobium diazoefficiens (strain JCM 10833 / BCRC 13528 / IAM 13628 / NBRC 14792 / USDA 110).